A 436-amino-acid polypeptide reads, in one-letter code: MAKPVVAIVGRPNVGKSTIFNRIVGERVSIVEDVPGVTRDRIYNSAEWLGKEFNIIDTGGIDLSDEPFLEQIRAQAEIAIDEADVIIFITNGREGVTDADEQVAKILYRSNKPIVLAINKVDNPEMRDQIYDFYSLGFGEPYPISGSHGLGLGDMLDAVRAHFPKEEEEEYPDDTVKFSLIGRPNVGKSSILNALLGEDRVIVSDIAGTTRDAIDTTYTFDGQDYVMIDTAGMRKRGKVYESTEKYSVLRAMRAIERSDVVLVVINAEEGIREQDKRIAGYAHDAGRAIIIVVNKWDAINKDEKTINVWTEDIREQFQFLSYAPIVFVSAKTKQRLNNLFPLINQVSDNHSLRVQSSMLNDVISDAVAMNPSPMDKGKRLKIFYTTQVAVKPPTFVVFVNDPELMHFSYERFLENRIREAFPFEGTPIRVIARKRK.

EngA-type G domains are found at residues P4–E167 and V176–S351. GTP-binding positions include G10–S17, D57–I61, N119–D122, G182–S189, D229–M233, and N294–D297. The KH-like domain maps to L352 to K436.

Belongs to the TRAFAC class TrmE-Era-EngA-EngB-Septin-like GTPase superfamily. EngA (Der) GTPase family. As to quaternary structure, associates with the 50S ribosomal subunit.

In terms of biological role, GTPase that plays an essential role in the late steps of ribosome biogenesis. The chain is GTPase Der from Listeria monocytogenes serotype 4b (strain F2365).